The following is an 83-amino-acid chain: Disintegrin bitistatin (83 aa).

Residues 2 to 83 (PPVCGNKILE…GKSSDCPWNH (82 aa)) form the Disintegrin domain. 10 disulfides stabilise this stretch: Cys5–Cys24, Cys5–Cys34, Cys16–Cys29, Cys16–Cys34, Cys18–Cys24, Cys18–Cys29, Cys28–Cys51, Cys42–Cys48, Cys47–Cys72, and Cys60–Cys79. The Cell attachment site motif lies at 64–66 (RGD).

This sequence belongs to the venom metalloproteinase (M12B) family. P-II subfamily. P-IIa sub-subfamily. In terms of assembly, monomer. In terms of processing, exists in 3 forms in the venom. The forms A, B, and C are present at 53%, 32% and 15%. The forms A and B differ by their disulfide bond pattern in the N-terminal part. No information is known about form C. Expressed by the venom gland.

The protein resides in the secreted. Functionally, inhibits fibrinogen interaction with platelets. Acts by binding to alpha-IIb/beta-3 (ITGA2B/ITGB3) on the platelet surface and inhibits aggregation induced by ADP, thrombin, platelet-activating factor and collagen. In Bitis arietans (African puff adder), this protein is Disintegrin bitistatin.